Reading from the N-terminus, the 61-residue chain is Metallothionein-1 (61 aa).

At Met1 the chain carries N-acetylmethionine. Residues 1 to 29 are beta; sequence MDPNCSCATGVSCTCADSCKCKECKCTSC. Residues Cys5, Cys7, Cys13, Cys15, Cys19, Cys21, Cys24, Cys26, Cys29, Cys33, Cys34, Cys36, Cys37, Cys41, Cys44, Cys48, Cys50, Cys57, Cys59, and Cys60 each coordinate a divalent metal cation. Residues 30–61 are alpha; the sequence is KKSCCSCCPVGCAKCAQGCVCKGASEKCNCCA.

Belongs to the metallothionein superfamily. Type 1 family.

In terms of biological role, metallothioneins have a high content of cysteine residues that bind various heavy metals; these proteins are transcriptionally regulated by both heavy metals and glucocorticoids. In Chlorocebus aethiops (Green monkey), this protein is Metallothionein-1 (MT1).